An 86-amino-acid chain; its full sequence is Small ribosomal subunit protein uS17 (86 aa).

This sequence belongs to the universal ribosomal protein uS17 family. In terms of assembly, part of the 30S ribosomal subunit.

One of the primary rRNA binding proteins, it binds specifically to the 5'-end of 16S ribosomal RNA. This chain is Small ribosomal subunit protein uS17, found in Chlamydia pneumoniae (Chlamydophila pneumoniae).